The primary structure comprises 372 residues: NAD(P)H-quinone oxidoreductase subunit 1 (372 aa).

8 helical membrane-spanning segments follow: residues 27 to 47 (AIWM…GVLV), 97 to 117 (WLFT…FLIV), 128 to 148 (VGMG…GLLM), 166 to 186 (AAQS…IAMM), 204 to 224 (ILGW…IAAL), 249 to 269 (YSGM…ILSS), 308 to 328 (SLGI…AILL), and 351 to 371 (VGLV…FAFG).

This sequence belongs to the complex I subunit 1 family. In terms of assembly, NDH-1 is composed of at least 11 different subunits.

It is found in the cellular thylakoid membrane. The catalysed reaction is a plastoquinone + NADH + (n+1) H(+)(in) = a plastoquinol + NAD(+) + n H(+)(out). The enzyme catalyses a plastoquinone + NADPH + (n+1) H(+)(in) = a plastoquinol + NADP(+) + n H(+)(out). In terms of biological role, NDH-1 shuttles electrons from an unknown electron donor, via FMN and iron-sulfur (Fe-S) centers, to quinones in the respiratory and/or the photosynthetic chain. The immediate electron acceptor for the enzyme in this species is believed to be plastoquinone. Couples the redox reaction to proton translocation, and thus conserves the redox energy in a proton gradient. The sequence is that of NAD(P)H-quinone oxidoreductase subunit 1 from Nostoc punctiforme (strain ATCC 29133 / PCC 73102).